The primary structure comprises 553 residues: Nucleoside-diphosphatase mig-23 (553 aa).

Over 1–8 (MRVSRRFT) the chain is Cytoplasmic. Residues 9 to 29 (ILAITAMIFLSLIICIYAVAA) traverse the membrane as a helical segment. At 30–489 (HTTVNVILQK…IVKETHSASE (460 aa)) the chain is on the lumenal side. The Proton acceptor role is filled by E174. N190 and N284 each carry an N-linked (GlcNAc...) asparagine glycan. The helical transmembrane segment at 490 to 510 (SLWAPLFFLSAVFCLFVLVCA) threads the bilayer. Over 511 to 553 (KEHSLLCFDDKRRASFGLTRRQYSYKMLKEDRTSSSAFLENFA) the chain is Cytoplasmic.

It belongs to the GDA1/CD39 NTPase family.

The protein localises to the golgi apparatus membrane. It carries out the reaction a ribonucleoside 5'-diphosphate + H2O = a ribonucleoside 5'-phosphate + phosphate + H(+). Seems to be able to hydrolyze ADP, UDP and GDP. Supports mig-17 glycosylation and surface expression, which is required for proper migration of distal tip cells during gonad morphogenesis. The protein is Nucleoside-diphosphatase mig-23 of Caenorhabditis briggsae.